Reading from the N-terminus, the 446-residue chain is uncharacterized protein (446 aa).

Phosphoserine is present on residues S393 and S397. Residues 411-431 (LSSTERRDLDRVRDKQKKQDQ) form a disordered region.

The protein belongs to the IFRD family.

The protein resides in the cytoplasm. This is an uncharacterized protein from Schizosaccharomyces pombe (strain 972 / ATCC 24843) (Fission yeast).